Reading from the N-terminus, the 291-residue chain is Elongation factor Ts (291 aa).

The tract at residues T78–V81 is involved in Mg(2+) ion dislocation from EF-Tu.

It belongs to the EF-Ts family.

The protein resides in the cytoplasm. In terms of biological role, associates with the EF-Tu.GDP complex and induces the exchange of GDP to GTP. It remains bound to the aminoacyl-tRNA.EF-Tu.GTP complex up to the GTP hydrolysis stage on the ribosome. This Ureaplasma parvum serovar 3 (strain ATCC 27815 / 27 / NCTC 11736) protein is Elongation factor Ts.